A 358-amino-acid chain; its full sequence is Peptide chain release factor 2 (358 aa).

Gln242 carries the post-translational modification N5-methylglutamine.

It belongs to the prokaryotic/mitochondrial release factor family. In terms of processing, methylated by PrmC. Methylation increases the termination efficiency of RF2.

It is found in the cytoplasm. Functionally, peptide chain release factor 2 directs the termination of translation in response to the peptide chain termination codons UGA and UAA. In Borreliella burgdorferi (strain ATCC 35210 / DSM 4680 / CIP 102532 / B31) (Borrelia burgdorferi), this protein is Peptide chain release factor 2 (prfB).